A 494-amino-acid polypeptide reads, in one-letter code: MVPVVALVGRPNVGKSTLFNRLTRTRDALVADFPGLTRDRKYGQAKLGEHEFIVIDTGGIDGSEEGVETKMAQQSLAAIDEADVVLFMVDGRAGLTVADEAIAQHLRRIEKPAILVVNKVDGIDADAASAEFWQLGMDQMYQIAAAHGRGVGALIDRVLNPFAEQMESEQAQLEDLTNEEDPEEEQLEYSEEEAEAEYKRLQDLPIKLAIIGRPNVGKSTLTNRILGEERVVVYDMPGTTRDSIYIPMKRDEREYVLIDTAGVRRRKRINETVEKFSVVKTLQAIEDANVVLLVVDARENISDQDLSLLGFALNSGRSIVIAVNKWDGLSFDVKEHVKKELDRRLGFVDFARIHFISALHGTGVGHLFESVQEAYRSATTRVGTSVLTRIMKMATDDHQPPMVRGRRVKLKYAHAGGYNPPIIVIHGNQVNELPDSYKRYLMNYYRKSLEIMGTPIRIQFQNSENPFEGKTNKMTLSQERQRKRLMSMVKNRRK.

2 consecutive EngA-type G domains span residues 3-166 (PVVA…AEQM) and 206-379 (IKLA…RSAT). GTP is bound by residues 9–16 (GRPNVGKS), 56–60 (DTGGI), 118–121 (NKVD), 212–219 (GRPNVGKS), 259–263 (DTAGV), and 324–327 (NKWD). The region spanning 380–464 (TRVGTSVLTR…PIRIQFQNSE (85 aa)) is the KH-like domain.

It belongs to the TRAFAC class TrmE-Era-EngA-EngB-Septin-like GTPase superfamily. EngA (Der) GTPase family. Associates with the 50S ribosomal subunit.

GTPase that plays an essential role in the late steps of ribosome biogenesis. This is GTPase Der from Vibrio cholerae serotype O1 (strain ATCC 39541 / Classical Ogawa 395 / O395).